A 107-amino-acid chain; its full sequence is U1-lycotoxin-Ls1w (107 aa).

The first 20 residues, 1–20 (MLKVLVVVALLVTLISYSSS), serve as a signal peptide directing secretion. Positions 21–41 (EGIDDLEADELLSLMANEQTR) are excised as a propeptide. 4 cysteine pairs are disulfide-bonded: Cys-44-Cys-59, Cys-51-Cys-68, Cys-58-Cys-86, and Cys-70-Cys-84.

It belongs to the neurotoxin 19 (CSTX) family. 04 (U1-Lctx) subfamily. Expressed by the venom gland.

It localises to the secreted. The chain is U1-lycotoxin-Ls1w from Lycosa singoriensis (Wolf spider).